A 442-amino-acid polypeptide reads, in one-letter code: Protein translocase subunit SecY (442 aa).

10 helical membrane passes run 29–49 (LITI…VPDI), 69–89 (IFTG…LPYI), 126–146 (YIAF…LLRP), 153–173 (PLFI…VMWI), 182–202 (IGNG…PQTL), 217–237 (ITAV…IVFV), 274–294 (VMPI…AGFA), 320–340 (VYTV…ASLI), 377–397 (LTFL…FVEQ), and 400–420 (GVTT…GVAI).

Belongs to the SecY/SEC61-alpha family. As to quaternary structure, component of the Sec protein translocase complex. Heterotrimer consisting of SecY, SecE and SecG subunits. The heterotrimers can form oligomers, although 1 heterotrimer is thought to be able to translocate proteins. Interacts with the ribosome. Interacts with SecDF, and other proteins may be involved. Interacts with SecA.

The protein resides in the cell inner membrane. Its subcellular location is the cellular thylakoid membrane. The central subunit of the protein translocation channel SecYEG. Consists of two halves formed by TMs 1-5 and 6-10. These two domains form a lateral gate at the front which open onto the bilayer between TMs 2 and 7, and are clamped together by SecE at the back. The channel is closed by both a pore ring composed of hydrophobic SecY resides and a short helix (helix 2A) on the extracellular side of the membrane which forms a plug. The plug probably moves laterally to allow the channel to open. The ring and the pore may move independently. This is Protein translocase subunit SecY from Synechocystis sp. (strain ATCC 27184 / PCC 6803 / Kazusa).